A 368-amino-acid chain; its full sequence is Putative flavoprotein monooxygenase (368 aa).

Residues Ala14, Glu34, Ser41, 52-53 (IT), Val110, Ala307, and Ile319 contribute to the FAD site.

Requires FAD as cofactor.

Its function is as follows. FAD-binding protein that may have monooxygenase activity using NADPH and/or NADH as an electron donor. The chain is Putative flavoprotein monooxygenase from Staphylococcus aureus (strain Mu50 / ATCC 700699).